The primary structure comprises 76 residues: Acyl carrier protein (76 aa).

The region spanning 1–75 (MIFEKIKDLI…DIVFYITKNT (75 aa)) is the Carrier domain. An O-(pantetheine 4'-phosphoryl)serine modification is found at serine 35.

Belongs to the acyl carrier protein (ACP) family. In terms of processing, 4'-phosphopantetheine is transferred from CoA to a specific serine of apo-ACP by AcpS. This modification is essential for activity because fatty acids are bound in thioester linkage to the sulfhydryl of the prosthetic group.

It localises to the cytoplasm. It participates in lipid metabolism; fatty acid biosynthesis. Its function is as follows. Carrier of the growing fatty acid chain in fatty acid biosynthesis. The polypeptide is Acyl carrier protein (Aster yellows witches'-broom phytoplasma (strain AYWB)).